A 303-amino-acid chain; its full sequence is Glycine--tRNA ligase alpha subunit (303 aa).

It belongs to the class-II aminoacyl-tRNA synthetase family. In terms of assembly, tetramer of two alpha and two beta subunits.

The protein localises to the cytoplasm. It catalyses the reaction tRNA(Gly) + glycine + ATP = glycyl-tRNA(Gly) + AMP + diphosphate. This Helicobacter pylori (strain ATCC 700392 / 26695) (Campylobacter pylori) protein is Glycine--tRNA ligase alpha subunit (glyQ).